A 395-amino-acid chain; its full sequence is Beta-1,4-galactosyltransferase 3 (395 aa).

Residues 1–10 (MLRRLLERPC) lie on the Cytoplasmic side of the membrane. Residues 11–31 (TLALLVGSQLAVMMYLSLGGF) form a helical; Signal-anchor for type II membrane protein membrane-spanning segment. The Lumenal portion of the chain corresponds to 32–395 (RSLSALFGRD…ANHTAPHGSH (364 aa)). Asn57 carries N-linked (GlcNAc...) asparagine glycosylation. A disulfide bond links Cys79 and Cys121. UDP-alpha-D-galactose contacts are provided by residues 132-136 (PHRAR), 171-173 (FNR), 198-199 (VD), Tyr228, and Trp260. Cysteines 192 and 211 form a disulfide. Residue Asp199 participates in Mn(2+) binding. 262-265 (GEDD) is a binding site for N-acetyl-D-glucosamine. Position 293 (His293) interacts with Mn(2+). UDP-alpha-D-galactose is bound at residue 293–295 (HRG). Position 305 (Arg305) interacts with N-acetyl-D-glucosamine. Residues Asn339 and Asn387 are each glycosylated (N-linked (GlcNAc...) asparagine). The segment at 341–395 (TADIGTDPRGPRAPSGPRYPPGSSQAFRQEMLQRRPPARPGPLPTANHTAPHGSH) is disordered.

The protein belongs to the glycosyltransferase 7 family. It depends on Mn(2+) as a cofactor.

It localises to the golgi apparatus. The protein resides in the golgi stack membrane. The enzyme catalyses an N-acetyl-beta-D-glucosaminyl derivative + UDP-alpha-D-galactose = a beta-D-galactosyl-(1-&gt;4)-N-acetyl-beta-D-glucosaminyl derivative + UDP + H(+). The catalysed reaction is N-acetyl-D-glucosamine + UDP-alpha-D-galactose = beta-D-galactosyl-(1-&gt;4)-N-acetyl-D-glucosamine + UDP + H(+). It catalyses the reaction a beta-D-GlcNAc-(1-&gt;3)-beta-D-Gal-(1-&gt;4)-beta-D-Glc-(1&lt;-&gt;1)-Cer(d18:1(4E)) + UDP-alpha-D-galactose = a neolactoside nLc4Cer(d18:1(4E)) + UDP + H(+). It carries out the reaction a beta-D-glucosylceramide + UDP-alpha-D-galactose = a beta-D-galactosyl-(1-&gt;4)-beta-D-glucosyl-(1&lt;-&gt;1)-ceramide + UDP + H(+). The enzyme catalyses a neolactoside IV(3)-beta-GlcNAc-nLc4Cer + UDP-alpha-D-galactose = a neolactoside nLc6Cer + UDP + H(+). The protein operates within protein modification; protein glycosylation. In terms of biological role, responsible for the synthesis of complex-type N-linked oligosaccharides in many glycoproteins as well as the carbohydrate moieties of glycolipids. The chain is Beta-1,4-galactosyltransferase 3 (B4GALT3) from Cricetulus griseus (Chinese hamster).